Reading from the N-terminus, the 110-residue chain is UPF0251 protein PYRAB12660 (110 aa).

Belongs to the UPF0251 family.

This is UPF0251 protein PYRAB12660 from Pyrococcus abyssi (strain GE5 / Orsay).